We begin with the raw amino-acid sequence, 1066 residues long: Coiled-coil domain-containing protein 73 (1066 aa).

Coiled-coil stretches lie at residues 47–134 (KAET…QVSQ) and 178–391 (LVRE…KTEE). Disordered stretches follow at residues 568–600 (LDTRSNKASSNGMSNEMAHKRNYNTDGSESNPF), 719–811 (SENS…PKSG), 854–883 (LSPATPSADSVSTSARSAFDLPSPDKPEKT), 944–978 (KNIESDPTSNSRAADTMSNWSIHLDPKGQPREERN), and 1003–1027 (VQQSHSQTVKVTDSPDPLTFSPGNN). 5 stretches are compositionally biased toward polar residues: residues 591–600 (NTDGSESNPF), 742–781 (RTNTNDIQNSSLRNHLGASESSVSVSDFQVNQGDSHTSQA), 789–811 (PLTTSSEKQPPSESQITETPKSG), 857–869 (ATPSADSVSTSAR), and 948–964 (SDPTSNSRAADTMSNWS). A compositionally biased stretch (basic and acidic residues) spans 967–978 (LDPKGQPREERN). A compositionally biased stretch (polar residues) spans 1003–1013 (VQQSHSQTVKV).

This Mus musculus (Mouse) protein is Coiled-coil domain-containing protein 73 (Ccdc73).